The primary structure comprises 131 residues: Histone H2B.1 (131 aa).

The span at 1–19 (MSAKAEKKPASKAPAEKKP) shows a compositional bias: basic and acidic residues. The segment at 1 to 38 (MSAKAEKKPASKAPAEKKPAAKKTSTSTDGKKRSKARK) is disordered. Lys7 and Lys8 each carry N6-acetyllysine; alternate. Glycyl lysine isopeptide (Lys-Gly) (interchain with G-Cter in SUMO); alternate cross-links involve residues Lys7 and Lys8. At Ser11 the chain carries Phosphoserine. The residue at position 12 (Lys12) is an N6-acetyllysine. N6-acetyllysine; alternate is present on residues Lys17, Lys18, Lys22, and Lys23. Residues Lys17 and Lys18 each participate in a glycyl lysine isopeptide (Lys-Gly) (interchain with G-Cter in SUMO); alternate cross-link. At Lys22 the chain carries N6-butyryllysine; alternate. Lys23 bears the N6-methyllysine; alternate mark. The residue at position 35 (Lys35) is an N6-succinyllysine. Lys38 bears the N6,N6-dimethyllysine mark. Position 47 is an N6-succinyllysine (Lys47). Lys124 participates in a covalent cross-link: Glycyl lysine isopeptide (Lys-Gly) (interchain with G-Cter in ubiquitin).

The protein belongs to the histone H2B family. As to quaternary structure, the nucleosome is a histone octamer containing two molecules each of H2A, H2B, H3 and H4 assembled in one H3-H4 heterotetramer and two H2A-H2B heterodimers. The octamer wraps approximately 147 bp of DNA. Post-translationally, monoubiquitinated by the RAD6/UBC2-BRE1 complex to form H2BK123ub1. H2BK123ub1 gives a specific tag for epigenetic transcriptional activation and is also prerequisite for H3K4me and H3K79me formation. H2BK123ub1 also modulates the formation of double-strand breaks during meiosis and is a prerequisite for DNA-damage checkpoint activation. Deubiquitination is performed by UBP8 in presence of SGF11. In terms of processing, phosphorylated by STE20 to form H2BS10ph during progression through meiotic prophase. May be correlated with chromosome condensation. H2BS10ph is also formed after H(2)O(2) treatment, and is a step leading to apoptosis. Acetylated by GCN5, a component of the SAGA complex, to form H2BK11ac and H2BK16ac. H2BK16ac can also be formed by ESA1, a component of the NuA4 histone acetyltransferase (HAT) complex. Acetylation of N-terminal lysines and particularly formation of H2BK11acK16ac has a positive effect on transcription. Post-translationally, sumoylation to form H2BK6su or H2BK7su, and probably also H2BK16su or H2BK17su, occurs preferentially near the telomeres and represses gene transcription.

The protein localises to the nucleus. Its subcellular location is the chromosome. Functionally, core component of nucleosome. Nucleosomes wrap and compact DNA into chromatin, limiting DNA accessibility to the cellular machineries which require DNA as a template. Histones thereby play a central role in transcription regulation, DNA repair, DNA replication and chromosomal stability. DNA accessibility is regulated via a complex set of post-translational modifications of histones, also called histone code, and nucleosome remodeling. This Saccharomyces cerevisiae (strain ATCC 204508 / S288c) (Baker's yeast) protein is Histone H2B.1 (HTB1).